We begin with the raw amino-acid sequence, 193 residues long: tRNA(Phe) 7-((3-amino-3-carboxypropyl)-4-demethylwyosine(37)-N(4))-methyltransferase (193 aa).

This sequence belongs to the TYW3 family.

It carries out the reaction 4-demethyl-7-[(3S)-3-amino-3-carboxypropyl]wyosine(37) in tRNA(Phe) + S-adenosyl-L-methionine = 7-[(3S)-3-amino-3-carboxypropyl]wyosine(37) in tRNA(Phe) + S-adenosyl-L-homocysteine + H(+). Functionally, S-adenosyl-L-methionine-dependent methyltransferase that acts as a component of the wyosine derivatives biosynthesis pathway. Probably methylates N-4 position of wybutosine-86 to produce wybutosine-72. This chain is tRNA(Phe) 7-((3-amino-3-carboxypropyl)-4-demethylwyosine(37)-N(4))-methyltransferase, found in Methanocaldococcus jannaschii (strain ATCC 43067 / DSM 2661 / JAL-1 / JCM 10045 / NBRC 100440) (Methanococcus jannaschii).